The primary structure comprises 100 residues: MYB-like transcription factor TCL2 (100 aa).

A Myb-like domain is found at 37–74 (TEQEEDLIFRMHRLVGDRWDLIAGRVVGREAKDIERYW).

Interacts with GL3. As to expression, expressed in cotyledons, petioles, rosette leaves, hydathodes, cauline leaves, stems, pedicels and flower buds.

It is found in the nucleus. In terms of biological role, MYB-type transcription factor involved in trichome cell specification. Acts as a negative regulator of trichome patterning and formation. May function by suppressing the expression of GL3. The chain is MYB-like transcription factor TCL2 (TCL2) from Arabidopsis thaliana (Mouse-ear cress).